The chain runs to 191 residues: Protein LURP-one-related 6 (191 aa).

It belongs to the LOR family.

Its function is as follows. Might be related to the phospholipid scramblase and tubby-like superfamily of membrane tethered transcription factors. In Arabidopsis thaliana (Mouse-ear cress), this protein is Protein LURP-one-related 6.